A 587-amino-acid chain; its full sequence is 2-succinyl-5-enolpyruvyl-6-hydroxy-3-cyclohexene-1-carboxylate synthase (587 aa).

The protein belongs to the TPP enzyme family. MenD subfamily. Homodimer. The cofactor is Mg(2+). It depends on Mn(2+) as a cofactor. Thiamine diphosphate is required as a cofactor.

It carries out the reaction isochorismate + 2-oxoglutarate + H(+) = 5-enolpyruvoyl-6-hydroxy-2-succinyl-cyclohex-3-ene-1-carboxylate + CO2. It functions in the pathway quinol/quinone metabolism; 1,4-dihydroxy-2-naphthoate biosynthesis; 1,4-dihydroxy-2-naphthoate from chorismate: step 2/7. Its pathway is cofactor biosynthesis; phylloquinone biosynthesis. Its function is as follows. Catalyzes the thiamine diphosphate-dependent decarboxylation of 2-oxoglutarate and the subsequent addition of the resulting succinic semialdehyde-thiamine pyrophosphate anion to isochorismate to yield 2-succinyl-5-enolpyruvyl-6-hydroxy-3-cyclohexene-1-carboxylate (SEPHCHC). The polypeptide is 2-succinyl-5-enolpyruvyl-6-hydroxy-3-cyclohexene-1-carboxylate synthase (Prochlorococcus marinus (strain MIT 9215)).